Here is a 565-residue protein sequence, read N- to C-terminus: MKSPAPSRPQKMALIPACIFLCFAALSVQAEETPVTPQPPDILLGPLFNDVQNAKLFPDQKTFADAMPNSDPLMILADYRMQQNQSGFDLRHFVNVNFTLPKEGEKYVPPEGQSLREHIDGLWPVLTRSTENTEKWDSLLPLPEPYVVPGGRFREVYYWDSYFTMLGLAESGHWDKVADMVANFAHEIDTYGHIPNGNRSYYLSRSQPPFFALMVELLAQHEGDAALKQYLPQMQKEYAYWMDGVENLQAGQQEKRVVKLQDGTLLNRYWDDRDTPRPESWVEDIATAKSNPNRPATEIYRDLRSAAASGWDFSSRWMDNPQQLNTLRTTSIVPVDLNSLMFKMEKILARASKAAGDNAMANQYETLANARQKGIEKYLWNDQQGWYADYDLKSHKVRNQLTAAALFPLYVNAAAKDRANKMATATKTHLLQPGGLNTTSVKSGQQWDAPNGWAPLQWVATEGLQNYGQKEVAMDISWHFLTNVQHTYDREKKLVEKYDVSTTGTGGGGGEYPLQDGFGWTNGVTLKMLDLICPKEQPCDNVPATRPTVKSATTQPSTKEAQPTP.

The first 30 residues, methionine 1–alanine 30, serve as a signal peptide directing secretion. Substrate contacts are provided by residues arginine 152, tryptophan 159–aspartate 160, asparagine 196, arginine 205–glutamine 207, arginine 277–glutamate 279, and glycine 310. Catalysis depends on proton donor/acceptor residues aspartate 312 and glutamate 496. Glutamate 511 contacts substrate. Residues proline 538–proline 565 are disordered. The segment covering threonine 548–proline 565 has biased composition (polar residues).

The protein belongs to the glycosyl hydrolase 37 family. Monomer.

It is found in the periplasm. The catalysed reaction is alpha,alpha-trehalose + H2O = alpha-D-glucose + beta-D-glucose. Provides the cells with the ability to utilize trehalose at high osmolarity by splitting it into glucose molecules that can subsequently be taken up by the phosphotransferase-mediated uptake system. The protein is Periplasmic trehalase of Escherichia coli (strain 55989 / EAEC).